A 98-amino-acid polypeptide reads, in one-letter code: DNA-binding protein HU (98 aa).

Belongs to the bacterial histone-like protein family. In terms of assembly, homodimer.

Functionally, histone-like DNA-binding protein which is capable of wrapping DNA to stabilize it, and thus to prevent its denaturation under extreme environmental conditions. The polypeptide is DNA-binding protein HU (hup) (Campylobacter jejuni subsp. jejuni serotype O:2 (strain ATCC 700819 / NCTC 11168)).